We begin with the raw amino-acid sequence, 200 residues long: Proteasome subunit beta 2 (200 aa).

Positions 1 to 7 (MEEKKTG) are cleaved as a propeptide — removed in mature form; by autocatalysis. T8 functions as the Nucleophile in the catalytic mechanism.

The protein belongs to the peptidase T1B family. In terms of assembly, the 20S proteasome core is composed of 14 alpha and 14 beta subunits that assemble into four stacked heptameric rings, resulting in a barrel-shaped structure. The two inner rings, each composed of seven catalytic beta subunits, are sandwiched by two outer rings, each composed of seven alpha subunits. The catalytic chamber with the active sites is on the inside of the barrel. Has a gated structure, the ends of the cylinder being occluded by the N-termini of the alpha-subunits. Is capped at one or both ends by the proteasome regulatory ATPase, PAN.

It is found in the cytoplasm. It carries out the reaction Cleavage of peptide bonds with very broad specificity.. With respect to regulation, the formation of the proteasomal ATPase PAN-20S proteasome complex, via the docking of the C-termini of PAN into the intersubunit pockets in the alpha-rings, triggers opening of the gate for substrate entry. Interconversion between the open-gate and close-gate conformations leads to a dynamic regulation of the 20S proteasome proteolysis activity. Component of the proteasome core, a large protease complex with broad specificity involved in protein degradation. This chain is Proteasome subunit beta 2, found in Thermococcus gammatolerans (strain DSM 15229 / JCM 11827 / EJ3).